We begin with the raw amino-acid sequence, 364 residues long: Tyrosine--tRNA ligase (364 aa).

Position 39 (Y39) interacts with L-tyrosine. Residues H49 and W52 each coordinate ATP. L-tyrosine-binding residues include Y165, Q169, D172, and Q187. Residues K238–S242 carry the 'KMSKS' region motif. K241 contacts ATP.

The protein belongs to the class-I aminoacyl-tRNA synthetase family. TyrS type 4 subfamily. Homodimer.

The protein resides in the cytoplasm. It carries out the reaction tRNA(Tyr) + L-tyrosine + ATP = L-tyrosyl-tRNA(Tyr) + AMP + diphosphate + H(+). Its function is as follows. Catalyzes the attachment of tyrosine to tRNA(Tyr) in a two-step reaction: tyrosine is first activated by ATP to form Tyr-AMP and then transferred to the acceptor end of tRNA(Tyr). This is Tyrosine--tRNA ligase from Aeropyrum pernix (strain ATCC 700893 / DSM 11879 / JCM 9820 / NBRC 100138 / K1).